We begin with the raw amino-acid sequence, 143 residues long: Nucleoside diphosphate kinase (143 aa).

Positions 11, 59, 87, 93, 104, and 114 each coordinate ATP. His117 functions as the Pros-phosphohistidine intermediate in the catalytic mechanism.

This sequence belongs to the NDK family. In terms of assembly, homotetramer. The cofactor is Mg(2+).

The protein resides in the cytoplasm. It catalyses the reaction a 2'-deoxyribonucleoside 5'-diphosphate + ATP = a 2'-deoxyribonucleoside 5'-triphosphate + ADP. It carries out the reaction a ribonucleoside 5'-diphosphate + ATP = a ribonucleoside 5'-triphosphate + ADP. Its function is as follows. Major role in the synthesis of nucleoside triphosphates other than ATP. The ATP gamma phosphate is transferred to the NDP beta phosphate via a ping-pong mechanism, using a phosphorylated active-site intermediate. In Erwinia tasmaniensis (strain DSM 17950 / CFBP 7177 / CIP 109463 / NCPPB 4357 / Et1/99), this protein is Nucleoside diphosphate kinase.